Here is a 626-residue protein sequence, read N- to C-terminus: Myelin-associated glycoprotein (626 aa).

An N-terminal signal peptide occupies residues 1–19 (MIFLTTLPLFWIMISASRG). The tract at residues 20-325 (GHWGAWMPSS…RTVELSVMYA (306 aa)) is interaction with RTN4R and RTN4RL2. Over 20-516 (GHWGAWMPSS…HRLMWAKIGP (497 aa)) the chain is Extracellular. An Ig-like V-type domain is found at 22-120 (WGAWMPSSIS…LGGKYYFRGD (99 aa)). 3 disulfide bridges follow: Cys-37–Cys-165, Cys-42–Cys-100, and Cys-159–Cys-217. Residue 65–67 (YPK) coordinates a ganglioside GT1b (d18:1(4E)). Asn-99 carries N-linked (GlcNAc...) asparagine glycosylation. A ganglioside GT1b (d18:1(4E)) contacts are provided by residues Arg-118 and 124–128 (YNQYT). Ig-like C2-type domains are found at residues 139-237 (NTPN…LDVK), 241-325 (VIVE…VMYA), 327-412 (WKPT…VEFA), and 413-508 (PIIL…GAHR). Residues Asn-223 and Asn-246 are each glycosylated (N-linked (GlcNAc...) asparagine). Cys-261 and Cys-305 are oxidised to a cystine. N-linked (GlcNAc...) asparagine glycosylation is found at Asn-315 and Asn-332. The cysteines at positions 347 and 392 are disulfide-linked. Asn-406 carries an N-linked (GlcNAc...) asparagine glycan. Disulfide bonds link Cys-421/Cys-430 and Cys-432/Cys-488. N-linked (GlcNAc...) asparagine glycosylation is found at Asn-450 and Asn-454. The helical transmembrane segment at 517 to 536 (VGAVVAFAILIAIVCYITQT) threads the bilayer. Residue Cys-531 is the site of S-palmitoyl cysteine attachment. Residues 537–626 (RRKKNVTESP…LAEYAEIRVK (90 aa)) lie on the Cytoplasmic side of the membrane. Ser-545, Ser-547, and Ser-549 each carry phosphoserine. Residues 577-626 (LGSERRLLGLRGEPPELDLSYSHSDLGKRPTKDSYTLTEELAEYAEIRVK) form a required for normal axon myelination in the central nervous system region. The disordered stretch occupies residues 581–608 (RRLLGLRGEPPELDLSYSHSDLGKRPTK).

Belongs to the immunoglobulin superfamily. SIGLEC (sialic acid binding Ig-like lectin) family. Monomer and homodimer. Interacts (via the first three N-terminal Ig-like domains) with RTN4R and RTN4RL2. Interacts with isoform 2 of BSG. Post-translationally, N-glycosylated. Phosphorylated on tyrosine residues. In terms of processing, ubiquitinated, leading to proteasomal degradation. In terms of tissue distribution, detected in myelin. Detected in olfactory bulb and throughout the brain (at protein level). Detected in brain.

The protein resides in the cell membrane. It is found in the membrane raft. Its function is as follows. Adhesion molecule that mediates interactions between myelinating cells and neurons by binding to neuronal sialic acid-containing gangliosides and to the glycoproteins RTN4R and RTN4RL2. Not required for initial myelination, but seems to play a role in the maintenance of normal axon myelination. Protects motoneurons against apoptosis, also after injury; protection against apoptosis is probably mediated via interaction with neuronal RTN4R and RTN4RL2. Required to prevent degeneration of myelinated axons in adults; this probably depends on binding to gangliosides on the axon cell membrane. Negative regulator of neurite outgrowth; in dorsal root ganglion neurons the inhibition is mediated primarily via binding to neuronal RTN4R or RTN4RL2 and to a lesser degree via binding to neuronal gangliosides. In cerebellar granule cells the inhibition is mediated primarily via binding to neuronal gangliosides. In sensory neurons, inhibition of neurite extension depends only partially on RTN4R, RTN4RL2 and gangliosides. Inhibits axon longitudinal growth. Inhibits axon outgrowth by binding to RTN4R. Preferentially binds to alpha-2,3-linked sialic acid. Binds ganglioside Gt1b. The chain is Myelin-associated glycoprotein (Mag) from Rattus norvegicus (Rat).